The following is a 793-amino-acid chain: MNLFICHVFLLLLHGYLIICQDIPPDTIISAVNTAQQEVTQREASSFSQQQARASVAAFAGAPQPAAVLAASRPARTGLDRFNRRNDPQRNTELSIGGQVTQRATLALRSSDPASAAAPAARTLTPLDARAPAAGFSASSTMTFRNAAAQSCTDSRPVTVCDPQQRYRETDGQCNNLVFPSFPSGAFKLGAAFTAQGRFLFPAYDDGVSSPRIRSVIPGFLLPNARLVSRNVHSGTAFDSDRHTPFLTHFGQFIDHDIVSTPETEPKFTMPNSHCCLEPNLEECFNINFEPDPLLQGSCIRFNRADTAPSYFCNPGPRLQQNQRSSFVDGTMVYGWDVEQENRLREPGTGRLISEGDDQLKLEPVADPLNPPCFPVDNRCFEAGDHRSLETVPLTVMHIMFLRRHNLIVQELQNLPLPWTPELLFQEAKRIVVAELQHITYNEFLPRVLGPQFMTIFRLWPAPLFSDTYSPLVDPRTTSGFSVAAYRFGHSLVRNVHDQIGPGGLPVNNLLLQDHFDRLQTHLNVFPGGNTEGFARWMKLSQKSRADRTLVDGLQNNLFPCEDPDCPMGGGVTKSFDLAALNIQRGRDHGLPPYTAWRYWCTGRRAFVFTPNAVGLSDHSPFEANILSNTYRHVDDIDLFTGGMTEMRRPGALLGPTLSCIIGLQFSNYKRGDRFFYERPDPVMAFTPGQLQAIKETSLAKILCSTMRSFSNVQIBAMDRVSPSNPIVNCDELRSQDIIAKIPFLWNQLPNRAIQSAAARASNISGRTGLRVSTRFEDPAMLRLIGRRRLYKH.

An N-terminal signal peptide occupies residues methionine 1 to cysteine 20.

This sequence belongs to the peroxidase family. Prismatic layer of shell (at protein level). Expressed primarily in the mantle with highest level in the mantle edge and lower level in the mantle pallium.

Its subcellular location is the secreted. This chain is Peroxidase-like protein, found in Margaritifera margaritifera (Freshwater pearl mussel).